The primary structure comprises 87 residues: MVKNAFISVISQEENRGSVEFQVVIFTNKIRRLTSHLEFHRKDFLSQRGLRKILGKRQRLLSYLSKKDKVRYTELISQLDIRELTTR.

It belongs to the universal ribosomal protein uS15 family. Part of the 30S ribosomal subunit.

It is found in the plastid. It localises to the chloroplast. The sequence is that of Small ribosomal subunit protein uS15c (rps15) from Oenothera argillicola (Appalachian evening primrose).